Here is a 310-residue protein sequence, read N- to C-terminus: tRNA uridine(34) hydroxylase (310 aa).

Residues 134–232 (DDPDTLLIDT…YFEEVSQTES (99 aa)) form the Rhodanese domain. The active-site Cysteine persulfide intermediate is C192.

This sequence belongs to the TrhO family.

It carries out the reaction uridine(34) in tRNA + AH2 + O2 = 5-hydroxyuridine(34) in tRNA + A + H2O. Catalyzes oxygen-dependent 5-hydroxyuridine (ho5U) modification at position 34 in tRNAs. The polypeptide is tRNA uridine(34) hydroxylase (Prochlorococcus marinus (strain MIT 9313)).